We begin with the raw amino-acid sequence, 356 residues long: Peptide chain release factor 1 (356 aa).

The residue at position 233 (glutamine 233) is an N5-methylglutamine.

This sequence belongs to the prokaryotic/mitochondrial release factor family. In terms of processing, methylated by PrmC. Methylation increases the termination efficiency of RF1.

The protein localises to the cytoplasm. Its function is as follows. Peptide chain release factor 1 directs the termination of translation in response to the peptide chain termination codons UAG and UAA. This Shouchella clausii (strain KSM-K16) (Alkalihalobacillus clausii) protein is Peptide chain release factor 1.